A 235-amino-acid polypeptide reads, in one-letter code: Adenosine 5'-phosphosulfate reductase (235 aa).

The [4Fe-4S] cluster site is built by Cys-121, Cys-122, Cys-204, and Cys-207. Residue Cys-230 is the Nucleophile; cysteine thiosulfonate intermediate of the active site.

This sequence belongs to the PAPS reductase family. CysH subfamily. [4Fe-4S] cluster serves as cofactor.

It is found in the cytoplasm. It carries out the reaction [thioredoxin]-disulfide + sulfite + AMP + 2 H(+) = adenosine 5'-phosphosulfate + [thioredoxin]-dithiol. Its pathway is sulfur metabolism; hydrogen sulfide biosynthesis; sulfite from sulfate. Catalyzes the formation of sulfite from adenosine 5'-phosphosulfate (APS) using thioredoxin as an electron donor. The sequence is that of Adenosine 5'-phosphosulfate reductase from Geobacillus sp. (strain WCH70).